We begin with the raw amino-acid sequence, 313 residues long: Formimidoylglutamase (313 aa).

Mn(2+)-binding residues include His130, Asp155, His157, Asp159, Asp241, and Asp243.

It belongs to the arginase family. Mn(2+) serves as cofactor.

The catalysed reaction is N-formimidoyl-L-glutamate + H2O = formamide + L-glutamate. It functions in the pathway amino-acid degradation; L-histidine degradation into L-glutamate; L-glutamate from N-formimidoyl-L-glutamate (hydrolase route): step 1/1. Its function is as follows. Catalyzes the conversion of N-formimidoyl-L-glutamate to L-glutamate and formamide. The chain is Formimidoylglutamase from Salmonella arizonae (strain ATCC BAA-731 / CDC346-86 / RSK2980).